The chain runs to 409 residues: Aquaporin-10 (409 aa).

Disordered regions lie at residues 1 to 24 (MADAPTYIRQSTTGTATTAPTTMP) and 47 to 74 (ADVNDDNHDNYDETTGLRSGEKKTRPLV). The segment covering 12 to 22 (TTGTATTAPTT) has biased composition (low complexity). A run of 2 helical transmembrane segments spans residues 110 to 130 (FLGSFILIVFGNGVVAQVVLS) and 138 to 158 (LSINIGYGLAVAFGVYIAGGI). An NPA 1 motif is present at residues 164-166 (NPA). The helical transmembrane segment at 184–204 (VYMFAQYAGCICASAIVHAIY) threads the bilayer. The N-linked (GlcNAc...) asparagine glycan is linked to asparagine 215. Helical transmembrane passes span 241 to 261 (TGLADQIFATSFLMIGILALT) and 270 to 290 (GGVVPILVGCLVMAIGLAYGF). An NPA 2 motif is present at residues 297–299 (NPA). Residues 339-359 (IPVVGPHLGALLGAAIYFFFI) form a helical membrane-spanning segment.

Belongs to the MIP/aquaporin (TC 1.A.8) family.

The protein resides in the cell membrane. Aquaglyceroporin that may modulate the water content and osmolytes during anhydrobiosis. The protein is Aquaporin-10 of Milnesium tardigradum (Water bear).